We begin with the raw amino-acid sequence, 361 residues long: Probable dual-specificity RNA methyltransferase RlmN (361 aa).

Catalysis depends on Glu-102, which acts as the Proton acceptor. Positions 108–344 (SGDRLTVCVS…VRWSKGLGAD (237 aa)) constitute a Radical SAM core domain. A disulfide bond links Cys-115 and Cys-347. [4Fe-4S] cluster contacts are provided by Cys-122, Cys-126, and Cys-129. S-adenosyl-L-methionine-binding positions include 169 to 170 (GE), Ser-199, 228 to 230 (SLH), and Asn-304. The S-methylcysteine intermediate role is filled by Cys-347.

It belongs to the radical SAM superfamily. RlmN family. [4Fe-4S] cluster serves as cofactor.

The protein localises to the cytoplasm. The catalysed reaction is adenosine(2503) in 23S rRNA + 2 reduced [2Fe-2S]-[ferredoxin] + 2 S-adenosyl-L-methionine = 2-methyladenosine(2503) in 23S rRNA + 5'-deoxyadenosine + L-methionine + 2 oxidized [2Fe-2S]-[ferredoxin] + S-adenosyl-L-homocysteine. The enzyme catalyses adenosine(37) in tRNA + 2 reduced [2Fe-2S]-[ferredoxin] + 2 S-adenosyl-L-methionine = 2-methyladenosine(37) in tRNA + 5'-deoxyadenosine + L-methionine + 2 oxidized [2Fe-2S]-[ferredoxin] + S-adenosyl-L-homocysteine. Functionally, specifically methylates position 2 of adenine 2503 in 23S rRNA and position 2 of adenine 37 in tRNAs. This chain is Probable dual-specificity RNA methyltransferase RlmN, found in Synechococcus elongatus (strain ATCC 33912 / PCC 7942 / FACHB-805) (Anacystis nidulans R2).